The following is a 283-amino-acid chain: Pantothenate synthetase (283 aa).

30 to 37 contacts ATP; that stretch reads MGNLHDGH. His-37 (proton donor) is an active-site residue. Residue Gln-61 coordinates (R)-pantoate. Position 61 (Gln-61) interacts with beta-alanine. Position 149 to 152 (149 to 152) interacts with ATP; it reads GEKD. Position 155 (Gln-155) interacts with (R)-pantoate. Residue 186 to 189 coordinates ATP; sequence LSSR.

Belongs to the pantothenate synthetase family. In terms of assembly, homodimer.

It localises to the cytoplasm. The catalysed reaction is (R)-pantoate + beta-alanine + ATP = (R)-pantothenate + AMP + diphosphate + H(+). It participates in cofactor biosynthesis; (R)-pantothenate biosynthesis; (R)-pantothenate from (R)-pantoate and beta-alanine: step 1/1. Functionally, catalyzes the condensation of pantoate with beta-alanine in an ATP-dependent reaction via a pantoyl-adenylate intermediate. This chain is Pantothenate synthetase, found in Escherichia coli O127:H6 (strain E2348/69 / EPEC).